Consider the following 62-residue polypeptide: Sperm protamine P1 (62 aa).

A disordered region spans residues 1-62; sequence MARYRHSXSR…RYSRRRRRRY (62 aa).

It belongs to the protamine P1 family. In terms of tissue distribution, testis.

It is found in the nucleus. Its subcellular location is the chromosome. Functionally, protamines substitute for histones in the chromatin of sperm during the haploid phase of spermatogenesis. They compact sperm DNA into a highly condensed, stable and inactive complex. The protein is Sperm protamine P1 (PRM1) of Petrogale xanthopus (Yellow-footed rock wallaby).